Here is a 219-residue protein sequence, read N- to C-terminus: Ribose-5-phosphate isomerase A (219 aa).

Residues 28 to 31 (SGST), 81 to 84 (DGAD), and 94 to 97 (KGGG) each bind substrate. Glutamate 103 serves as the catalytic Proton acceptor. Residue lysine 121 coordinates substrate.

It belongs to the ribose 5-phosphate isomerase family. In terms of assembly, homodimer.

The enzyme catalyses aldehydo-D-ribose 5-phosphate = D-ribulose 5-phosphate. Its pathway is carbohydrate degradation; pentose phosphate pathway; D-ribose 5-phosphate from D-ribulose 5-phosphate (non-oxidative stage): step 1/1. Catalyzes the reversible conversion of ribose-5-phosphate to ribulose 5-phosphate. This chain is Ribose-5-phosphate isomerase A, found in Haemophilus influenzae (strain PittEE).